A 295-amino-acid polypeptide reads, in one-letter code: Acetylglutamate kinase (295 aa).

Residues 70 to 71, Arg92, and Asn191 each bind substrate; that span reads GG.

Belongs to the acetylglutamate kinase family. ArgB subfamily.

It is found in the cytoplasm. The enzyme catalyses N-acetyl-L-glutamate + ATP = N-acetyl-L-glutamyl 5-phosphate + ADP. The protein operates within amino-acid biosynthesis; L-arginine biosynthesis; N(2)-acetyl-L-ornithine from L-glutamate: step 2/4. In terms of biological role, catalyzes the ATP-dependent phosphorylation of N-acetyl-L-glutamate. The polypeptide is Acetylglutamate kinase (Mycobacterium avium (strain 104)).